Consider the following 331-residue polypeptide: Meiotic recombination protein W68 (331 aa).

One can recognise a Topo IIA-type catalytic domain in the interval 1 to 120 (MDEFSENIER…LGILAASKGL (120 aa)). The O-(5'-phospho-DNA)-tyrosine intermediate role is filled by Tyr-81. 2 residues coordinate Mg(2+): Glu-167 and Asp-221.

This sequence belongs to the TOP6A family. Mg(2+) serves as cofactor.

It is found in the nucleus. The catalysed reaction is ATP-dependent breakage, passage and rejoining of double-stranded DNA.. In terms of biological role, required for meiotic recombination. Together with mei-P22, mediates DNA cleavage that forms the double-strand breaks (DSB) that initiate meiotic recombination. This Drosophila melanogaster (Fruit fly) protein is Meiotic recombination protein W68.